A 116-amino-acid chain; its full sequence is UPF0342 protein LBA1592 (116 aa).

The protein belongs to the UPF0342 family.

This Lactobacillus acidophilus (strain ATCC 700396 / NCK56 / N2 / NCFM) protein is UPF0342 protein LBA1592.